The sequence spans 437 residues: Magnetosome protein MamN (437 aa).

Helical transmembrane passes span 26–46, 53–73, 95–115, 136–156, 174–194, 229–249, 252–268, 281–301, 320–340, 358–378, and 416–436; these read LAVLAGAAVLVVIGTISGTYT, SIYFETLALIFGMAAISALLA, WILVMMALVTYGISLASNSLI, VPVIIAEIIAANLGGSSTMIG, FIGGMMPACLILLAVTFLFFE, YGLIIFFITVIGLVLAGPLKV, GWIAFVAGLTALALGRF, DILFFGGLFVMVGALTSVGIL, AILLMWMAAGVTIFVGGGTSA, AAWWALALGIMAGSCAALSGA, and WGLPLMGIFLVLSTVYIAVLA.

The protein belongs to the arsenite-antimonite (ArsB) efflux (TC 2.A.45) family.

It is found in the magnetosome membrane. Functionally, plays a role in biomineralization; might regulate pH in the magnetosome. The polypeptide is Magnetosome protein MamN (Magnetospirillum gryphiswaldense (strain DSM 6361 / JCM 21280 / NBRC 15271 / MSR-1)).